The primary structure comprises 705 residues: Elongation factor G (705 aa).

A tr-type G domain is found at 7–287; sequence HLTRNIGIMA…YVCAFLPSPL (281 aa). Residues 16-23, 84-88, and 138-141 each bind GTP; these read AHIDAGKT, DTPGH, and NKMD. Residues 291 to 312 are disordered; the sequence is NVVGTNPDTGAEEDRKPSEDDK. The segment covering 302–312 has biased composition (basic and acidic residues); the sequence is EEDRKPSEDDK.

This sequence belongs to the TRAFAC class translation factor GTPase superfamily. Classic translation factor GTPase family. EF-G/EF-2 subfamily.

The protein localises to the cytoplasm. Catalyzes the GTP-dependent ribosomal translocation step during translation elongation. During this step, the ribosome changes from the pre-translocational (PRE) to the post-translocational (POST) state as the newly formed A-site-bound peptidyl-tRNA and P-site-bound deacylated tRNA move to the P and E sites, respectively. Catalyzes the coordinated movement of the two tRNA molecules, the mRNA and conformational changes in the ribosome. The sequence is that of Elongation factor G from Bacteroides fragilis (strain ATCC 25285 / DSM 2151 / CCUG 4856 / JCM 11019 / LMG 10263 / NCTC 9343 / Onslow / VPI 2553 / EN-2).